The sequence spans 264 residues: Tritrans,polycis-undecaprenyl-diphosphate synthase (geranylgeranyl-diphosphate specific) (264 aa).

Residue aspartate 43 is part of the active site. A Mg(2+)-binding site is contributed by aspartate 43. Residues 44–47 (GNRR), tryptophan 48, histidine 60, and 88–90 (STE) each bind substrate. The active-site Proton acceptor is asparagine 91. Substrate contacts are provided by residues phenylalanine 92, arginine 94, arginine 213, and 219 to 221 (RIS). Residue glutamate 232 coordinates Mg(2+).

It belongs to the UPP synthase family. Homodimer. It depends on Mg(2+) as a cofactor.

The enzyme catalyses geranylgeranyl diphosphate + 7 isopentenyl diphosphate = tri-trans,hepta-cis-undecaprenyl diphosphate + 7 diphosphate. Its function is as follows. Catalyzes the sequential condensation of isopentenyl diphosphate (IPP) with geranylgeranyl diphosphate (GGPP) to yield (2Z,6Z,10Z,14Z,18Z,22Z,26Z,30E,34E,38E)-undecaprenyl diphosphate (tritrans,heptacis-UPP). It is probably the precursor of glycosyl carrier lipids. The sequence is that of Tritrans,polycis-undecaprenyl-diphosphate synthase (geranylgeranyl-diphosphate specific) from Thermococcus kodakarensis (strain ATCC BAA-918 / JCM 12380 / KOD1) (Pyrococcus kodakaraensis (strain KOD1)).